The following is a 269-amino-acid chain: Thiazole synthase (269 aa).

Lysine 95 functions as the Schiff-base intermediate with DXP in the catalytic mechanism. Residues glycine 156, 182 to 183, and 204 to 205 contribute to the 1-deoxy-D-xylulose 5-phosphate site; these read AG and NT.

Belongs to the ThiG family. In terms of assembly, homotetramer. Forms heterodimers with either ThiH or ThiS.

The protein localises to the cytoplasm. The catalysed reaction is [ThiS sulfur-carrier protein]-C-terminal-Gly-aminoethanethioate + 2-iminoacetate + 1-deoxy-D-xylulose 5-phosphate = [ThiS sulfur-carrier protein]-C-terminal Gly-Gly + 2-[(2R,5Z)-2-carboxy-4-methylthiazol-5(2H)-ylidene]ethyl phosphate + 2 H2O + H(+). Its pathway is cofactor biosynthesis; thiamine diphosphate biosynthesis. Its function is as follows. Catalyzes the rearrangement of 1-deoxy-D-xylulose 5-phosphate (DXP) to produce the thiazole phosphate moiety of thiamine. Sulfur is provided by the thiocarboxylate moiety of the carrier protein ThiS. In vitro, sulfur can be provided by H(2)S. This is Thiazole synthase from Shewanella frigidimarina (strain NCIMB 400).